The following is a 499-amino-acid chain: Glucose-6-phosphate isomerase (499 aa).

E352 serves as the catalytic Proton donor. Catalysis depends on residues H383 and K487.

This sequence belongs to the GPI family.

The protein resides in the cytoplasm. The enzyme catalyses alpha-D-glucose 6-phosphate = beta-D-fructose 6-phosphate. It functions in the pathway carbohydrate biosynthesis; gluconeogenesis. It participates in carbohydrate degradation; glycolysis; D-glyceraldehyde 3-phosphate and glycerone phosphate from D-glucose: step 2/4. In terms of biological role, catalyzes the reversible isomerization of glucose-6-phosphate to fructose-6-phosphate. The protein is Glucose-6-phosphate isomerase of Legionella pneumophila (strain Paris).